A 146-amino-acid chain; its full sequence is UPF0178 protein BCA_3127 (146 aa).

It belongs to the UPF0178 family.

This Bacillus cereus (strain 03BB102) protein is UPF0178 protein BCA_3127.